Here is a 535-residue protein sequence, read N- to C-terminus: Pre-mRNA-splicing factor SLU7-A (535 aa).

The interval glutamate 21–isoleucine 44 is disordered. The CCHC-type zinc-finger motif lies at cysteine 96–cysteine 109. The span at leucine 176–aspartate 190 shows a compositional bias: basic and acidic residues. Disordered stretches follow at residues leucine 176–valine 204 and glutamate 489–tyrosine 508. Acidic residues predominate over residues alanine 191–arginine 203. Serine 193 is subject to Phosphoserine. Positions leucine 486–arginine 493 match the Nuclear localization signal motif. Over residues glutamate 489–lysine 501 the composition is skewed to basic and acidic residues.

It belongs to the SLU7 family. Mainly expressed in tissues undergoing cell proliferation, particularly in lateral organs.

It is found in the nucleus. Its function is as follows. Participates in the second catalytic step of pre-mRNA splicing, when the free hydroxyl group of exon I attacks the 3'-splice site to generate spliced mRNA and the excised lariat intron. Together with SMP2, involved in the timing of cell cycle arrest during leaf development, in a STRUWWELPETER (SWP) dependent manner; promotes cell proliferation in developing organs. This Arabidopsis thaliana (Mouse-ear cress) protein is Pre-mRNA-splicing factor SLU7-A.